Here is a 139-residue protein sequence, read N- to C-terminus: Gas vesicle protein A (139 aa).

The segment at 113–139 (EKLGDMLTSDEPEPRKATRVRSRRADR) is disordered. Over residues 129–139 (ATRVRSRRADR) the composition is skewed to basic residues.

Belongs to the gas vesicle GvpA family. In terms of assembly, the gas vesicle shell is 2 nm thick and consists of a single layer of this protein. It forms helical ribs nearly perpendicular to the long axis of the vesicle.

It localises to the gas vesicle shell. Its function is as follows. Gas vesicles are hollow, gas filled proteinaceous nanostructures found in some microorganisms. During planktonic growth they allow positioning of the organism at a favorable depth for light or nutrient acquisition. GvpA forms the protein shell. This chain is Gas vesicle protein A, found in Mycobacterium sp. (strain JLS).